The sequence spans 329 residues: Ribosomal RNA small subunit methyltransferase H (329 aa).

S-adenosyl-L-methionine-binding positions include 44–46 (GGY), Asp62, Asp110, and Gln117. Residues 297–329 (APAELAANPRARSARLRSAERTSAPARRLGDAA) are disordered.

It belongs to the methyltransferase superfamily. RsmH family.

It is found in the cytoplasm. The enzyme catalyses cytidine(1402) in 16S rRNA + S-adenosyl-L-methionine = N(4)-methylcytidine(1402) in 16S rRNA + S-adenosyl-L-homocysteine + H(+). Its function is as follows. Specifically methylates the N4 position of cytidine in position 1402 (C1402) of 16S rRNA. The polypeptide is Ribosomal RNA small subunit methyltransferase H (Rhodospirillum centenum (strain ATCC 51521 / SW)).